The following is a 138-amino-acid chain: Acidic phospholipase A2 inhibitor chain HPD-1I (138 aa).

The N-terminal stretch at 1–16 (MRTLWIVAVCLIGVEG) is a signal peptide. 7 cysteine pairs are disulfide-bonded: C42–C131, C44–C60, C59–C111, C65–C138, C66–C104, C73–C97, and C91–C102.

As to quaternary structure, heterodimer of an acidic and a basic chain; non-covalently linked. The basic chain is toxic and has phospholipase A2 activity (chain HDP-1P (AC Q1RP79) or HDP-2P (AC Q1RP78)) and the acidic chain is non-toxic and functions as its inhibitor (chain HPD-1I). In terms of tissue distribution, expressed by the venom gland.

It localises to the secreted. In terms of biological role, heterodimer: slightly affects neuromuscular transmission acting presynaptically. It has a low catalytic activity, a low anticoagulant activity and weakly inhibits ADP-induced platelet aggregation. Functionally, monomer: has no activity (neurotoxic, catalytic, anticoagulant and a ADP-induced platelet aggregation), but inhibits phospholipase A2. This chain is Acidic phospholipase A2 inhibitor chain HPD-1I, found in Vipera nikolskii (Nikolsky's adder).